Here is a 292-residue protein sequence, read N- to C-terminus: Acetylglutamate kinase (292 aa).

Residues 60–61 (GG), Arg-82, and Asn-187 contribute to the substrate site.

This sequence belongs to the acetylglutamate kinase family. ArgB subfamily.

It is found in the cytoplasm. It catalyses the reaction N-acetyl-L-glutamate + ATP = N-acetyl-L-glutamyl 5-phosphate + ADP. Its pathway is amino-acid biosynthesis; L-arginine biosynthesis; N(2)-acetyl-L-ornithine from L-glutamate: step 2/4. Catalyzes the ATP-dependent phosphorylation of N-acetyl-L-glutamate. The chain is Acetylglutamate kinase from Methanobrevibacter smithii (strain ATCC 35061 / DSM 861 / OCM 144 / PS).